The primary structure comprises 277 residues: 4-hydroxy-3-methylbut-2-enyl diphosphate reductase (277 aa).

[4Fe-4S] cluster is bound at residue Cys12. (2E)-4-hydroxy-3-methylbut-2-enyl diphosphate-binding residues include His36 and His70. Residues His36 and His70 each coordinate dimethylallyl diphosphate. Isopentenyl diphosphate contacts are provided by His36 and His70. Cys92 provides a ligand contact to [4Fe-4S] cluster. Residue His120 coordinates (2E)-4-hydroxy-3-methylbut-2-enyl diphosphate. His120 contacts dimethylallyl diphosphate. His120 contributes to the isopentenyl diphosphate binding site. Glu122 acts as the Proton donor in catalysis. Residue Thr158 coordinates (2E)-4-hydroxy-3-methylbut-2-enyl diphosphate. Cys186 contacts [4Fe-4S] cluster. Residues Ser214, Asn216, and Ser258 each coordinate (2E)-4-hydroxy-3-methylbut-2-enyl diphosphate. Residues Ser214, Asn216, and Ser258 each coordinate dimethylallyl diphosphate. Positions 214, 216, and 258 each coordinate isopentenyl diphosphate.

The protein belongs to the IspH family. [4Fe-4S] cluster is required as a cofactor.

It carries out the reaction isopentenyl diphosphate + 2 oxidized [2Fe-2S]-[ferredoxin] + H2O = (2E)-4-hydroxy-3-methylbut-2-enyl diphosphate + 2 reduced [2Fe-2S]-[ferredoxin] + 2 H(+). The enzyme catalyses dimethylallyl diphosphate + 2 oxidized [2Fe-2S]-[ferredoxin] + H2O = (2E)-4-hydroxy-3-methylbut-2-enyl diphosphate + 2 reduced [2Fe-2S]-[ferredoxin] + 2 H(+). Its pathway is isoprenoid biosynthesis; dimethylallyl diphosphate biosynthesis; dimethylallyl diphosphate from (2E)-4-hydroxy-3-methylbutenyl diphosphate: step 1/1. The protein operates within isoprenoid biosynthesis; isopentenyl diphosphate biosynthesis via DXP pathway; isopentenyl diphosphate from 1-deoxy-D-xylulose 5-phosphate: step 6/6. In terms of biological role, catalyzes the conversion of 1-hydroxy-2-methyl-2-(E)-butenyl 4-diphosphate (HMBPP) into a mixture of isopentenyl diphosphate (IPP) and dimethylallyl diphosphate (DMAPP). Acts in the terminal step of the DOXP/MEP pathway for isoprenoid precursor biosynthesis. The sequence is that of 4-hydroxy-3-methylbut-2-enyl diphosphate reductase from Campylobacter jejuni subsp. doylei (strain ATCC BAA-1458 / RM4099 / 269.97).